The following is a 959-amino-acid chain: UPF0182 protein MAE_41360 (959 aa).

The next 9 helical transmembrane spans lie at 13–33, 50–70, 99–119, 156–176, 184–204, 239–259, 276–296, 319–339, and 362–382; these read PILLFLGCLVIGQLGVLVVAN, LSWQLGLGWGSAILSLLFIFT, LLGLLIIATGIGAWIGSMLLY, DISSNLWQGLIIAFLVLGLLI, IISIVFTVMLSFIIAGQWANF, LWLTGVGIYTLFAVILTYLFS, LRHLYALWSGLMGLLVLHHII, VGQFIEIILGIIAGITSIWLG, and FFPYLVPVFLYLIVWISGTII.

Belongs to the UPF0182 family.

The protein resides in the cell membrane. The sequence is that of UPF0182 protein MAE_41360 from Microcystis aeruginosa (strain NIES-843 / IAM M-2473).